The chain runs to 164 residues: Ribosome maturation factor RimM (164 aa).

One can recognise a PRC barrel domain in the interval 90-161 (KGSYFIADLI…TVTIKPLEIW (72 aa)).

The protein belongs to the RimM family. In terms of assembly, binds ribosomal protein uS19.

It localises to the cytoplasm. Functionally, an accessory protein needed during the final step in the assembly of 30S ribosomal subunit, possibly for assembly of the head region. Essential for efficient processing of 16S rRNA. May be needed both before and after RbfA during the maturation of 16S rRNA. It has affinity for free ribosomal 30S subunits but not for 70S ribosomes. The chain is Ribosome maturation factor RimM from Clostridium botulinum (strain Hall / ATCC 3502 / NCTC 13319 / Type A).